The primary structure comprises 295 residues: MSVKHFIQITKPGIIFGNVLSVAGGFFLASKGHVDFALFLAVVIGTSLVVASGCVFNNCIDRDIDHKMERTKNRVMVQGGMSLPLALIYATLLGVAGFSLLYVQANPLSAFCALIGFIVYVGFYSLWLKRKSVHGTLVGSLSGAMPPVIGYCAVSNSFDLAAVTLLVMFSLWQMPHSFAIAIFRFKDYSAANIPVLPVARGVLAAKKQIVLYVLAFVLATLMLTLGGYAGLGYLAVAAAMGLYWLYMAWGGYKAEDDSKWARKVFGFSILTVTALSVMMGVDSQTAADVLMTYAR.

9 helical membrane-spanning segments follow: residues 9-29 (ITKPGIIFGNVLSVAGGFFLA), 36-56 (FALFLAVVIGTSLVVASGCVF), 83-103 (LPLALIYATLLGVAGFSLLYV), 108-128 (LSAFCALIGFIVYVGFYSLWL), 135-155 (GTLVGSLSGAMPPVIGYCAVS), 163-183 (VTLLVMFSLWQMPHSFAIAIF), 209-229 (IVLYVLAFVLATLMLTLGGYA), 230-250 (GLGYLAVAAAMGLYWLYMAWG), and 264-284 (VFGFSILTVTALSVMMGVDSQ).

Belongs to the UbiA prenyltransferase family. Protoheme IX farnesyltransferase subfamily.

The protein resides in the cell inner membrane. It carries out the reaction heme b + (2E,6E)-farnesyl diphosphate + H2O = Fe(II)-heme o + diphosphate. It functions in the pathway porphyrin-containing compound metabolism; heme O biosynthesis; heme O from protoheme: step 1/1. Converts heme B (protoheme IX) to heme O by substitution of the vinyl group on carbon 2 of heme B porphyrin ring with a hydroxyethyl farnesyl side group. In Pseudomonas putida (strain GB-1), this protein is Protoheme IX farnesyltransferase 2.